We begin with the raw amino-acid sequence, 212 residues long: Glycerol-3-phosphate acyltransferase (212 aa).

5 helical membrane-spanning segments follow: residues 3–23 (IIIM…LWIG), 70–90 (IPII…FAII), 110–130 (AGVL…IFLL), 143–163 (ITVA…GFIL), and 164–184 (TDYD…IIIR).

It belongs to the PlsY family. In terms of assembly, probably interacts with PlsX.

It is found in the cell membrane. It carries out the reaction an acyl phosphate + sn-glycerol 3-phosphate = a 1-acyl-sn-glycero-3-phosphate + phosphate. It participates in lipid metabolism; phospholipid metabolism. Its function is as follows. Catalyzes the transfer of an acyl group from acyl-phosphate (acyl-PO(4)) to glycerol-3-phosphate (G3P) to form lysophosphatidic acid (LPA). This enzyme utilizes acyl-phosphate as fatty acyl donor, but not acyl-CoA or acyl-ACP. In Streptococcus agalactiae serotype III (strain NEM316), this protein is Glycerol-3-phosphate acyltransferase.